We begin with the raw amino-acid sequence, 253 residues long: MATAKTIDLTGKVVREIELPDVFDVDYRPDLIKKAVLAAQANRLQPYGPRLYAGMETSARGWGSGRGTSHVPRLVNSSRAARVPHARGGRRAHPPKPEADRSEKVNTKERRYAIRSAIAATRDPTLVSLRGHIFEAELPIVTENALEDLDKTKQVIEFLQAIGVYEDVLRAKYGRHIRAGRGKLRGRKYKHKKSVLIVAGESAPILKAARNLSGVDVATVDSLNAELLAPGTHAGRLTIWTESAVEKLEGAFQ.

Positions 61-107 are disordered; it reads GWGSGRGTSHVPRLVNSSRAARVPHARGGRRAHPPKPEADRSEKVNT. The span at 82 to 94 shows a compositional bias: basic residues; it reads RVPHARGGRRAHP. Positions 95–107 are enriched in basic and acidic residues; it reads PKPEADRSEKVNT.

Belongs to the universal ribosomal protein uL4 family. In terms of assembly, part of the 50S ribosomal subunit.

In terms of biological role, one of the primary rRNA binding proteins, this protein initially binds near the 5'-end of the 23S rRNA. It is important during the early stages of 50S assembly. It makes multiple contacts with different domains of the 23S rRNA in the assembled 50S subunit and ribosome. Its function is as follows. Forms part of the polypeptide exit tunnel. This Methanosarcina barkeri (strain Fusaro / DSM 804) protein is Large ribosomal subunit protein uL4.